A 126-amino-acid chain; its full sequence is Small ribosomal subunit protein uS13 (126 aa).

Residues 94–126 are disordered; the sequence is RGLPVHGQRTSTNARTRKGPRRAIAGKKKPGKK. Residues 108–126 are compositionally biased toward basic residues; it reads RTRKGPRRAIAGKKKPGKK.

Belongs to the universal ribosomal protein uS13 family. In terms of assembly, part of the 30S ribosomal subunit. Forms a loose heterodimer with protein S19. Forms two bridges to the 50S subunit in the 70S ribosome.

Functionally, located at the top of the head of the 30S subunit, it contacts several helices of the 16S rRNA. In the 70S ribosome it contacts the 23S rRNA (bridge B1a) and protein L5 of the 50S subunit (bridge B1b), connecting the 2 subunits; these bridges are implicated in subunit movement. Contacts the tRNAs in the A and P-sites. The sequence is that of Small ribosomal subunit protein uS13 from Streptomyces avermitilis (strain ATCC 31267 / DSM 46492 / JCM 5070 / NBRC 14893 / NCIMB 12804 / NRRL 8165 / MA-4680).